A 1430-amino-acid chain; its full sequence is Bromodomain-containing protein homolog (1430 aa).

The C2H2-type zinc finger occupies 23–49 (FACPVRGCDRSYKTIMGLQYHLMKYDH). Residues 51-111 (NPQPLTPVLT…AGGGSASGVS (61 aa)) are disordered. Residues 62 to 81 (SRKKARSRSGGHHSTPRPHK) are compositionally biased toward basic residues. The PHD-type 1 zinc finger occupies 283–333 (DAVCCICLDGECQNTNVILFCDMCNLAVHQDCYGVPYIPEGQWLCRRCLQS). Cys-286, Cys-289, Cys-303, Cys-306, His-311, Cys-314, Cys-327, and Cys-330 together coordinate Zn(2+). Residues 337–370 (PVNCVLCPNAGGAFKQTDHGQWAHVVCALWIPEV) form a C2HC pre-PHD-type zinc finger. The PHD-type 2 zinc-finger motif lies at 394-457 (LTCYVCKEKG…QKFAYCHAHT (64 aa)). The 105-residue stretch at 611 to 715 (LQLNPLEAAL…DQAAPLFVQV (105 aa)) folds into the Bromo domain. A compositionally biased stretch (basic residues) spans 796 to 805 (KARFAARHSS). Disordered stretches follow at residues 796 to 887 (KARF…SSPV), 901 to 942 (AQAA…TTAA), 1012 to 1054 (ANLP…QALP), and 1076 to 1301 (QRDV…GQKP). Residues 842 to 857 (HDDDDEEEDSDEDSMG) show a composition bias toward acidic residues. Residues 865 to 887 (LLNSTQTPPCSPIKSLNNSSSPV) are compositionally biased toward polar residues. Low complexity-rich tracts occupy residues 922-942 (NSQSSNTQSTSGSSSSVTTAA), 1034-1043 (SSSMSPKKSP), and 1085-1107 (APSQSSSPCSSCSDFSMSGSCSD). Residues 1108-1120 (FDSDEASEGDADG) show a composition bias toward acidic residues. Positions 1121 to 1137 (DPDRDGGRSRSEERDST) are enriched in basic and acidic residues. Composition is skewed to polar residues over residues 1151–1165 (ASLNNVQGNNGNMAI) and 1265–1278 (NTTAAGSAPLTNNN). Residues 1281-1293 (KHSEDSASSERHN) are compositionally biased toward basic and acidic residues. The PWWP domain maps to 1305–1378 (PLQLVWAKCR…TWQWLPANKL (74 aa)).

In terms of assembly, component of the Enok complex composed of at least Br140, enok, Eaf6 and Ing5. As part of the Enok complex, interacts with elg1 and the Elg1 RFC-like complex.

It is found in the nucleus. In terms of biological role, scaffold subunit of the histone acetyltransferase (HAT) Enok complex which has histone H3 acetyltransferase activity. As part of the Enok complex, associates with the Elg1 RFC-like complex and down-regulates its PCNA-unloading function to promote the G1/S transition. May also play a role in maintaining the protein levels and stability of enok. This is Bromodomain-containing protein homolog from Drosophila melanogaster (Fruit fly).